We begin with the raw amino-acid sequence, 59 residues long: Large ribosomal subunit protein bL32 (59 aa).

This sequence belongs to the bacterial ribosomal protein bL32 family.

The polypeptide is Large ribosomal subunit protein bL32 (Thermodesulfovibrio yellowstonii (strain ATCC 51303 / DSM 11347 / YP87)).